The sequence spans 204 residues: MELKQSLSTHLEAEKPLRRYGAVEETAWKTERLGRNQLDIISMAETTMMPEEIELEMAKIQRLREVLVRRESELRFMMDDIQLCKDIMDLKQELQNLVAIPEKEKTKLQKQREDELIQKIHKLVQKRDFLVDDAEVERLREQEEDKEMADFLRIKLKPLDKVTKSPASSRAEKKAEPPPSKPTVAKTGLALIKDCCGATQCNIM.

Positions 3-150 (LKQSLSTHLE…EQEEDKEMAD (148 aa)) constitute a bMERB domain. The segment at 162 to 187 (VTKSPASSRAEKKAEPPPSKPTVAKT) is disordered.

The protein is bMERB domain-containing protein 1 of Homo sapiens (Human).